We begin with the raw amino-acid sequence, 214 residues long: MTHITGTLYIISAPSGAGKTSLVKALMDAQQEPQHGAQAKIRVSVSHTTRAMRPGEVDGVNYNFVDRATFLSMIEHGDFLEQAEVFGNLYGTSQSHLQQTLDEGHDLILEIDWQGARQVRAQMPQARSIFILPPTQQALRQRLTNRGQDSDEIIEARMREAVSEMSHYSEYEYVVVNDDFAGALEDLKAIFRANRLTQQHQQEQYSELFQELLA.

One can recognise a Guanylate kinase-like domain in the interval 6-192; sequence GTLYIISAPS…ALEDLKAIFR (187 aa). 13 to 20 contributes to the ATP binding site; it reads APSGAGKT.

It belongs to the guanylate kinase family.

The protein localises to the cytoplasm. The enzyme catalyses GMP + ATP = GDP + ADP. In terms of biological role, essential for recycling GMP and indirectly, cGMP. This chain is Guanylate kinase, found in Pseudomonas syringae pv. syringae (strain B728a).